Consider the following 417-residue polypeptide: Probable medium-chain specific acyl-CoA dehydrogenase 10, mitochondrial (417 aa).

A mitochondrion-targeting transit peptide spans 1 to 15 (MLSRIATSSLGLSRS). FAD contacts are provided by residues 148–157 (YCVTEPGAGS) and 181–183 (WIT). Residue serine 157 coordinates substrate. 268–271 (DMTR) is a substrate binding site. FAD is bound by residues 306 to 307 (HQ) and 364 to 368 (QIFGG). Glutamate 391 (proton acceptor) is an active-site residue. A substrate-binding site is contributed by glycine 392. Position 393–395 (393–395 (TSQ)) interacts with FAD.

It belongs to the acyl-CoA dehydrogenase family. As to quaternary structure, homotetramer. It depends on FAD as a cofactor. As to expression, expressed in the epidermis and intestine.

The protein resides in the mitochondrion matrix. It carries out the reaction a medium-chain 2,3-saturated fatty acyl-CoA + oxidized [electron-transfer flavoprotein] + H(+) = a medium-chain (2E)-enoyl-CoA + reduced [electron-transfer flavoprotein]. The protein operates within lipid metabolism; mitochondrial fatty acid beta-oxidation. Functionally, this enzyme is specific for acyl chain lengths of 4 to 16. The protein is Probable medium-chain specific acyl-CoA dehydrogenase 10, mitochondrial (acdh-10) of Caenorhabditis elegans.